The primary structure comprises 541 residues: Membrane protein insertase YidC (541 aa).

Transmembrane regions (helical) follow at residues 7–27 (LLFMALLFISFLIYQQWQVDY), 345–365 (LVQNWGLAIIGVTLVVKAILY), 415–435 (LGGCLPILLQMPIFIALYWTF), 453–473 (LSAQDPYFILPILMGASMFLL), and 492–512 (FMPLIFMVFFLFFPAGLVLYW).

It belongs to the OXA1/ALB3/YidC family. Type 1 subfamily. In terms of assembly, interacts with the Sec translocase complex via SecD. Specifically interacts with transmembrane segments of nascent integral membrane proteins during membrane integration.

The protein resides in the cell inner membrane. Its function is as follows. Required for the insertion and/or proper folding and/or complex formation of integral membrane proteins into the membrane. Involved in integration of membrane proteins that insert both dependently and independently of the Sec translocase complex, as well as at least some lipoproteins. Aids folding of multispanning membrane proteins. The protein is Membrane protein insertase YidC of Histophilus somni (strain 129Pt) (Haemophilus somnus).